Here is a 104-residue protein sequence, read N- to C-terminus: UPF0145 protein cbdbA1711 (104 aa).

Belongs to the UPF0145 family.

The sequence is that of UPF0145 protein cbdbA1711 from Dehalococcoides mccartyi (strain CBDB1).